We begin with the raw amino-acid sequence, 1244 residues long: Mitotic chromosome and X-chromosome-associated protein mix-1 (1244 aa).

Residue 32-39 (GYNGSGKS) participates in ATP binding. Residues 247 to 355 (VKKSAKEIED…AKRKEHEDSK (109 aa)) are a coiled coil. Positions 337–355 (LSKDREVLDAKRKEHEDSK) are enriched in basic and acidic residues. A disordered region spans residues 337-369 (LSKDREVLDAKRKEHEDSKAANSKDIQSQSDDE). A compositionally biased stretch (polar residues) spans 356–365 (AANSKDIQSQ). A coiled-coil region spans residues 415-472 (ITAAKKRGERLHNQIKHLEGEKATLSARSKSDIGSADNYQKEVDEINKQLQLLGFNID). The SMC hinge domain occupies 526-654 (DVFGYVAHLI…DSLDVAREIA (129 aa)). 2 coiled-coil regions span residues 701-946 (PQIE…RKEA) and 975-1037 (YTVS…IATL). The span at 919–932 (AKTKSKREEKEKEL) shows a compositional bias: basic and acidic residues. Residues 919-943 (AKTKSKREEKEKELTSLQQSEASNR) are disordered. Residues 1216–1232 (DAAAKKGAQKNDKEPPK) are compositionally biased toward basic and acidic residues. The interval 1216–1244 (DAAAKKGAQKNDKEPPKKKPIVVDDDDFE) is disordered.

This sequence belongs to the SMC family. SMC2 subfamily. As to quaternary structure, component of the condensin I complex, which contains the mix-1/SMC2 and smc-4/SMC4 heterodimer, and three non SMC subunits that probably regulate the complex: dpy-26, capg-1 and dpy-28. Within the complex, interacts with smc-4, dpy-26, dpy-28 and capg-1. Interaction with smc-4 is required for mitotic chromosome localization. Component of the condensin II complex, which contains the mix-1/SMC2 and smc-4/SMC4 heterodimer, and three non SMC subunits, capg-2, kle-2 and hcp-6 that probably regulate the complex. Within the complex, interacts with smc-4, capg-2, kle-2 and hcp-6. Also a component of the condensin-like dosage compensation complex, which contains the mix-1/SMC2 and dpy-27/SMC4 heterodimer, and three non SMC subunits that probably regulate the complex: dpy-26, capg-1 and dpy-28. Within the complex, interacts with dpy-27, dpy-26, capg-1 and dpy-28. Requires capg-1 for hermaphrodite X chromosome localization. Interacts with smcl-1. Expressed in embryos and in adult somatic and germline tissues (at protein level).

The protein resides in the nucleus. The protein localises to the chromosome. Its function is as follows. Essential protein required for both chromosome condensation and segregation and X-chromosome dosage compensation depending on its binding partners. Central component of the condensin I complex, a complex required for conversion of interphase chromatin into mitotic-like condense chromosomes. The condensin complex introduces positive supercoils into relaxed DNA in the presence of type I topoisomerases. Converts nicked DNA into positive knotted forms in the presence of type II topoisomerases. Central component of the condensin II complex, a complex that seems to play a role in prophase chromosome condensation and organization. Both the condensin complex I and II play a role in meiotic and mitotic chromosome segregation. Plays a role in robust cytokinesis upon the presence of chromatin obstructions. Also a member of the condensin I-like dosage compensation complex that associates specifically with hermaphrodite X chromosomes to reduce their gene transcription during interphase. The protein is Mitotic chromosome and X-chromosome-associated protein mix-1 (mix-1) of Caenorhabditis elegans.